Reading from the N-terminus, the 394-residue chain is Phosphoglycerate kinase (394 aa).

Substrate-binding positions include 21 to 23 (DFN), arginine 36, 59 to 62 (HLGR), arginine 118, and arginine 151. Residues lysine 202, glycine 293, glutamate 324, and 350 to 353 (GGDS) each bind ATP.

Belongs to the phosphoglycerate kinase family. Monomer.

It localises to the cytoplasm. The enzyme catalyses (2R)-3-phosphoglycerate + ATP = (2R)-3-phospho-glyceroyl phosphate + ADP. Its pathway is carbohydrate degradation; glycolysis; pyruvate from D-glyceraldehyde 3-phosphate: step 2/5. The sequence is that of Phosphoglycerate kinase from Exiguobacterium sp. (strain ATCC BAA-1283 / AT1b).